Consider the following 424-residue polypeptide: CinA-like protein (424 aa).

The protein belongs to the CinA family.

The protein is CinA-like protein of Shewanella sediminis (strain HAW-EB3).